We begin with the raw amino-acid sequence, 1934 residues long: Pyruvate dehydrogenase [NADP(+)] (1934 aa).

4Fe-4S ferredoxin-type domains are found at residues 710-739 and 767-796; these read SIPIVDMNKCTQCNYCSIVCPHAAIRPFLL and YRIQVTPLDCTGCELCVHACPDDALHMEGL. Residues Cys719, Cys722, Cys725, Cys729, Cys776, Cys779, Cys782, and Cys786 each contribute to the [4Fe-4S] cluster site. A Flavodoxin-like domain is found at 1288 to 1438; sequence MHVLYGTETG…ELIEWLPDYL (151 aa). The FAD-binding FR-type domain occupies 1501–1759; the sequence is PNSVLLPVIE…NIKASAFNLP (259 aa). FAD-binding positions include 1542-1553 and 1685-1695; these read YCLGDSLALYGQ and IKSRSYSIASC.

It in the N-terminal section; belongs to the pyruvate:ferredoxin/flavodoxin oxidoreductase family. In terms of assembly, homodimer. It depends on FAD as a cofactor. FMN is required as a cofactor. Requires thiamine diphosphate as cofactor.

It carries out the reaction pyruvate + NADP(+) + CoA = acetyl-CoA + CO2 + NADPH. Its function is as follows. May have an important role in respiratory metabolism. Cryptosporidium have a relic mitochondrion with no function in energy metabolism so it is not known if PFOR has a function. The sequence is that of Pyruvate dehydrogenase [NADP(+)] (PFOR) from Cryptosporidium parvum.